Reading from the N-terminus, the 167-residue chain is Peptide deformylase (167 aa).

2 residues coordinate Fe cation: cysteine 91 and histidine 133. Glutamate 134 is a catalytic residue. Residue histidine 137 coordinates Fe cation.

It belongs to the polypeptide deformylase family. Fe(2+) serves as cofactor.

It carries out the reaction N-terminal N-formyl-L-methionyl-[peptide] + H2O = N-terminal L-methionyl-[peptide] + formate. Functionally, removes the formyl group from the N-terminal Met of newly synthesized proteins. Requires at least a dipeptide for an efficient rate of reaction. N-terminal L-methionine is a prerequisite for activity but the enzyme has broad specificity at other positions. The sequence is that of Peptide deformylase from Neisseria gonorrhoeae (strain ATCC 700825 / FA 1090).